An 893-amino-acid polypeptide reads, in one-letter code: DNA gyrase subunit A (893 aa).

A Topo IIA-type catalytic domain is found at 35–501 (LPDVRDGLKP…GLEDLEDEDL (467 aa)). The O-(5'-phospho-DNA)-tyrosine intermediate role is filled by Tyr123. Positions 528–534 (QNRGGRG) match the GyrA-box motif. Residues 810–893 (VNEEDDNEEN…ASDNEEDSDE (84 aa)) are disordered. 2 stretches are compositionally biased toward acidic residues: residues 812–821 (EEDDNEENAD) and 852–862 (DAEMESVESPE). Residues 863–879 (NDDRIDIRQDFMDRVNE) are compositionally biased toward basic and acidic residues. Residues 880–893 (DIESASDNEEDSDE) are compositionally biased toward acidic residues.

This sequence belongs to the type II topoisomerase GyrA/ParC subunit family. In terms of assembly, heterotetramer, composed of two GyrA and two GyrB chains. In the heterotetramer, GyrA contains the active site tyrosine that forms a transient covalent intermediate with DNA, while GyrB binds cofactors and catalyzes ATP hydrolysis.

Its subcellular location is the cytoplasm. It carries out the reaction ATP-dependent breakage, passage and rejoining of double-stranded DNA.. In terms of biological role, a type II topoisomerase that negatively supercoils closed circular double-stranded (ds) DNA in an ATP-dependent manner to modulate DNA topology and maintain chromosomes in an underwound state. Negative supercoiling favors strand separation, and DNA replication, transcription, recombination and repair, all of which involve strand separation. Also able to catalyze the interconversion of other topological isomers of dsDNA rings, including catenanes and knotted rings. Type II topoisomerases break and join 2 DNA strands simultaneously in an ATP-dependent manner. The chain is DNA gyrase subunit A from Staphylococcus epidermidis (strain ATCC 35984 / DSM 28319 / BCRC 17069 / CCUG 31568 / BM 3577 / RP62A).